The chain runs to 472 residues: Ammonium transporter Rh type C (472 aa).

Residues 1-9 (MAWNTNLRW) are Cytoplasmic-facing. Residues 10–30 (RLPLTCLLLEVVMVILFGVFV) form a helical membrane-spanning segment. Topologically, residues 31–51 (RYDFDADAHWWSWRTEFYYRY) are extracellular. A helical membrane pass occupies residues 52 to 72 (PSFQDVHVMVFVGFGFLMTFL). The Cytoplasmic portion of the chain corresponds to 73–76 (QRYG). Residues 77-97 (FSAVGFNFLLAAFGIQWALLM) traverse the membrane as a helical segment. Over 98–114 (QGWFHFLQGRYIVVGVE) the chain is Extracellular. The helical transmembrane segment at 115–135 (NLINADFCVASVCVAFGAVLG) threads the bilayer. Topologically, residues 136–139 (KVSP) are cytoplasmic. Residues 140–160 (IQLLIMTFFQVTLFAVNEFIL) form a helical membrane-spanning segment. Residues 161-168 (LNLLKVKD) lie on the Extracellular side of the membrane. A helical membrane pass occupies residues 169–191 (AGGSMTIHTFGAYFGLTVTRILY). Residues 192–209 (RRNLEQSKERQNSVYQSD) lie on the Cytoplasmic side of the membrane. The helical transmembrane segment at 210-230 (LFAMIGTLFLWMYWPSFNSAI) threads the bilayer. Residues 231–241 (SYHGDSQHRAA) are Extracellular-facing. Residues 242–262 (INTYCSLAACVLTSVAISSAL) traverse the membrane as a helical segment. Topologically, residues 263 to 294 (HKKGKLDMVHIQNATPAGGVAVGTAAEMMLMP) are cytoplasmic. Residues 295 to 315 (YGALIVGFVCGIISTLGFVYL) form a helical membrane-spanning segment. The Extracellular segment spans residues 316-336 (TPFLESRLHIQDTCGINNLHG). The chain crosses the membrane as a helical span at residues 337-357 (IPGIIGGIVGAVTAASASLEV). Residues 358-388 (YGKEGLVHSFDFQGFKRDWTARTQGKFQIYG) are Cytoplasmic-facing. The chain crosses the membrane as a helical span at residues 389 to 409 (LLVTLAMALMGGIIVGVGLIL). Topologically, residues 410-450 (RLPFWGQPSDENCFEDAVYWEMPEGNSTVYIPEDPTFKPSG) are extracellular. N-linked (GlcNAc...) asparagine glycosylation occurs at Asn-435. The chain crosses the membrane as a helical span at residues 451 to 471 (PSVPSVPMVSPLPMASSVPLV). A topological domain (cytoplasmic) is located at residue Pro-472.

The protein belongs to the ammonium transporter (TC 2.A.49) family. Rh subfamily. As to quaternary structure, homotrimer. Post-translationally, N-glycosylated.

Its subcellular location is the cell membrane. It is found in the apical cell membrane. It catalyses the reaction NH4(+)(in) = NH4(+)(out). It carries out the reaction methylamine(out) = methylamine(in). The enzyme catalyses CO2(out) = CO2(in). In terms of biological role, ammonium transporter involved in the maintenance of acid-base homeostasis. Transports ammonium and its related derivative methylammonium across the plasma membrane of epithelial cells likely contributing to renal transepithelial ammonia transport and ammonia metabolism. Postulated to primarily mediate an electroneutral bidirectional transport of NH3 ammonia species according to a mechanism that implies interaction of an NH4(+) ion with acidic residues of the pore entry followed by dissociation of NH4(+) into NH3 and H(+). As a result NH3 transits through the central pore and is protonated on the extracellular side reforming NH4(+). May act as a CO2 channel providing for renal acid secretion. In Pongo abelii (Sumatran orangutan), this protein is Ammonium transporter Rh type C (RHCG).